Reading from the N-terminus, the 1544-residue chain is Lysophospholipase NTE1 (1544 aa).

Topologically, residues 1–37 (MSTIEIVSTVAEYTEIHSPVSSKFLLPSARDSSSSIS) are cytoplasmic. The helical transmembrane segment at 38–58 (LFSAIFWFWSWLFFKIMNIFL) threads the bilayer. Residues 59–76 (YYIPNIIVNLFSVNFQIT) are Lumenal-facing. The chain crosses the membrane as a helical span at residues 77 to 97 (LSLSSIVITLTGIISFCFLIV). Residues 98–1544 (RYKYLTRYSK…RKSLYRRSSI (1447 aa)) lie on the Cytoplasmic side of the membrane. 2 disordered regions span residues 265–312 (RLFS…RNYP) and 424–552 (ESPS…EETE). A compositionally biased stretch (polar residues) spans 275–310 (NPASNPLSPDNTGSKSFDPLSSGNFNDTSLSSSDRN). Over residues 425-447 (SPSVSINKTSSSSSSLPKKSTTS) the composition is skewed to low complexity. 2 stretches are compositionally biased toward polar residues: residues 448-458 (LRPLNRNQSSR) and 517-536 (QISS…TTKF). Basic and acidic residues predominate over residues 537-546 (ENIRDRTFSD). A nucleoside 3',5'-cyclic phosphate is bound by residues 681–811 (SFES…LKSL) and 807–960 (KLKS…VANK). The PNPLA domain occupies 1237–1401 (LVLGGGGSRG…LDNLPVMEMK (165 aa)). A GXGXXG motif is present at residues 1241-1246 (GGGSRG). A GXSXG motif is present at residues 1268–1272 (GTSIG). The active-site Nucleophile is Ser-1270. Residue Asp-1388 is the Proton acceptor of the active site. A DGA/G motif is present at residues 1388 to 1390 (DGG).

The protein belongs to the NTE family.

It is found in the endoplasmic reticulum membrane. It carries out the reaction a 1-acyl-sn-glycero-3-phosphocholine + H2O = sn-glycerol 3-phosphocholine + a fatty acid + H(+). Its activity is regulated as follows. Inhibited by organophosphorus esters. In terms of biological role, intracellular phospholipase B that catalyzes the double deacylation of phosphatidylcholine (PC) to glycerophosphocholine (GroPCho). Plays an important role in membrane lipid homeostasis. Responsible for the rapid PC turnover in response to inositol, elevated temperatures, or when choline is present in the growth medium. The chain is Lysophospholipase NTE1 (NTE1) from Debaryomyces hansenii (strain ATCC 36239 / CBS 767 / BCRC 21394 / JCM 1990 / NBRC 0083 / IGC 2968) (Yeast).